The chain runs to 224 residues: Thylakoid lumenal 15 kDa protein 1, chloroplastic (224 aa).

The transit peptide at 1 to 34 (MVILSNVSLFSCCNISQKPSLFSPSSRSSHCPIR) directs the protein to the chloroplast. The transit peptide at 35 to 81 (CSQSQEGKEVVTSPLRSVVWSLGEEVSKRSLFALVSASLFFVDPALA) directs the protein to the thylakoid. 2 consecutive Pentapeptide repeat domains span residues 116 to 155 (SILR…DFSL) and 156 to 196 (ANVT…PLRD).

The protein resides in the plastid. Its subcellular location is the chloroplast thylakoid lumen. The chain is Thylakoid lumenal 15 kDa protein 1, chloroplastic from Arabidopsis thaliana (Mouse-ear cress).